We begin with the raw amino-acid sequence, 565 residues long: Sensor histidine kinase YpdA (565 aa).

The Cytoplasmic portion of the chain corresponds to 1–3 (MHE). The chain crosses the membrane as a helical span at residues 4–24 (IFNMLLAVFDRAALMLICLFF). The Periplasmic segment spans residues 25-45 (LIRIRLFRELLHKSAHSPKEL). The helical transmembrane segment at 46–66 (LAVTAIFSLFALFSTWSGVPV) threads the bilayer. Over 67–74 (EGSLVNVR) the chain is Cytoplasmic. A helical membrane pass occupies residues 75-95 (IIAVMSGGILFGPWVGIITGV). Topologically, residues 96 to 107 (IAGIHRYLIDIG) are periplasmic. Residues 108 to 128 (GVTAIPCFITSILAGCISGWI) traverse the membrane as a helical segment. At 129 to 139 (NLKIPKAQRWR) the chain is on the cytoplasmic side. The helical transmembrane segment at 140-160 (VGILGGMLCETLTMILVIVWA) threads the bilayer. At 161–172 (PTTALGIDIVSK) the chain is on the periplasmic side. The helical transmembrane segment at 173 to 193 (IGIPMILGSVCIGFIVLLVQS) threads the bilayer. Residues 194–565 (VEGEKEASAA…PVASQATLLL (372 aa)) are Cytoplasmic-facing. The GAF domain maps to 223-342 (VNSESLRKVC…AVGLSQIIST (120 aa)). The 212-residue stretch at 343 to 554 (QLEVSRAEQL…EIAFYIPNQR (212 aa)) folds into the Histidine kinase domain. H371 carries the phosphohistidine; by autocatalysis modification.

Interacts with BtsT and YhjX. Post-translationally, autophosphorylated.

The protein resides in the cell inner membrane. The catalysed reaction is ATP + protein L-histidine = ADP + protein N-phospho-L-histidine.. Its function is as follows. Member of the two-component regulatory system YpdA/YpdB, which is part of a nutrient-sensing regulatory network composed of YpdA/YpdB, the high-affinity pyruvate signaling system BtsS/BtsR and their respective target proteins, YhjX and BtsT. YpdA activates YpdB by phosphorylation in response to high concentrations of extracellular pyruvate. Activation of the YpdA/YpdB signaling cascade also promotes BtsS/BtsR-mediated btsT expression. The polypeptide is Sensor histidine kinase YpdA (ypdA) (Escherichia coli (strain K12)).